The chain runs to 290 residues: 1D-myo-inositol 2-acetamido-2-deoxy-alpha-D-glucopyranoside deacetylase (290 aa).

Residues H17, D20, and H150 each coordinate Zn(2+).

Belongs to the MshB deacetylase family. The cofactor is Zn(2+).

The enzyme catalyses 1D-myo-inositol 2-acetamido-2-deoxy-alpha-D-glucopyranoside + H2O = 1D-myo-inositol 2-amino-2-deoxy-alpha-D-glucopyranoside + acetate. Catalyzes the deacetylation of 1D-myo-inositol 2-acetamido-2-deoxy-alpha-D-glucopyranoside (GlcNAc-Ins) in the mycothiol biosynthesis pathway. This chain is 1D-myo-inositol 2-acetamido-2-deoxy-alpha-D-glucopyranoside deacetylase, found in Corynebacterium glutamicum (strain R).